A 201-amino-acid chain; its full sequence is uncharacterized protein (201 aa).

Residues 121–141 (HHRTRPGRGPGPRPGGSAMAG) are disordered.

This is an uncharacterized protein from Mycobacterium tuberculosis (strain ATCC 25618 / H37Rv).